Consider the following 161-residue polypeptide: SsrA-binding protein (161 aa).

This sequence belongs to the SmpB family.

Its subcellular location is the cytoplasm. In terms of biological role, required for rescue of stalled ribosomes mediated by trans-translation. Binds to transfer-messenger RNA (tmRNA), required for stable association of tmRNA with ribosomes. tmRNA and SmpB together mimic tRNA shape, replacing the anticodon stem-loop with SmpB. tmRNA is encoded by the ssrA gene; the 2 termini fold to resemble tRNA(Ala) and it encodes a 'tag peptide', a short internal open reading frame. During trans-translation Ala-aminoacylated tmRNA acts like a tRNA, entering the A-site of stalled ribosomes, displacing the stalled mRNA. The ribosome then switches to translate the ORF on the tmRNA; the nascent peptide is terminated with the 'tag peptide' encoded by the tmRNA and targeted for degradation. The ribosome is freed to recommence translation, which seems to be the essential function of trans-translation. In Vibrio campbellii (strain ATCC BAA-1116), this protein is SsrA-binding protein.